The sequence spans 167 residues: Dual specificity protein phosphatase 1B (167 aa).

The Tyrosine-protein phosphatase domain maps to 24 to 165 (DLSEIQQGLF…LQQFEKSIQG (142 aa)). The active-site Phosphocysteine intermediate is the C109.

It belongs to the protein-tyrosine phosphatase family. Non-receptor class dual specificity subfamily. As to quaternary structure, associates with MPK3 and MPK6. Interacts with MPK6 is promoted during HR-like responses triggered by fungal elicitors, whereas interaction with MPK3 in repressed. In terms of tissue distribution, expressed in flowers, seedlings, roots, leaves, and seeds. Present in stomata and meristematic cells.

The protein resides in the nucleus. The protein localises to the cytoplasm. The catalysed reaction is O-phospho-L-tyrosyl-[protein] + H2O = L-tyrosyl-[protein] + phosphate. It catalyses the reaction O-phospho-L-seryl-[protein] + H2O = L-seryl-[protein] + phosphate. It carries out the reaction O-phospho-L-threonyl-[protein] + H2O = L-threonyl-[protein] + phosphate. Functionally, has a dual specificity toward Ser/Thr and Tyr-containing proteins. Prevents biotic and abiotic stress responses, including ozone, oxidative stress and pathogen attacks; represses MAPK activities during hypersensitive response to limit the spread of the HR response after infection by necrotrophic pathogen such as Botrytis cinerea. May be also involved in ABA and salt responses. Dephosphorylates MPK3 and MPK6. The polypeptide is Dual specificity protein phosphatase 1B (DSPTP1B) (Arabidopsis thaliana (Mouse-ear cress)).